A 654-amino-acid polypeptide reads, in one-letter code: MNIESKIKELTEKLNQYAYEYYTLDEPSVEDSEYDRLYQELVKLEAENPQLTRADSPTHRTGGVILDGFVKFRHPYNLYSLGDVFSREELAVWEERVRKEIANPEYICELKIDGLSLSLYYENGLLMTAATRGDGTTGENITENVKRIKDVPLKLKEAIDIVVRGEAYLPRKNFAKLNKERELEGATPFANPRNAAAGTLRQLDTKIVAKRGLATFLYQEASPATNDTQEEVLEYFEELGFQVNPERKFARNMDEIWEFIEEATRLRDELPYDIDGVVVKVNNLAEQEELGFTVKAPRWAIAYKFPAEQAETEILSVDWTVGRTGVVTPTANMTPVLLAQTTVARATLHNVDYIEEKDIRIGDHVLIYKAGDIIPKVGKVLLDKRPEGLEGLEIPTKCPECGSELIHFEDEVALRCVNPLCPAQIREKLIHFASRDAMNIVGLGPSVISQLFDKKLVADVADLYQLTIEDLLTLDKVKETLAQKIVSAIAQSRENSAEKLLFGLGIRHVGGKAAKLLLERFANLRALSKATEEEISEIPSLGGVIATAVVSYFETDGAKILLDELENAGVNFDYLGAVNIEGILSGKTVVLTGKLTTLKRSEAKEKLEALGANVSGSVSKKTDLVVAGEEAGSKLTKAQDLGIEIWSEQDLLDL.

Residues 31 to 35, 80 to 81, and glutamate 109 each bind NAD(+); these read DSEYD and SL. The N6-AMP-lysine intermediate role is filled by lysine 111. NAD(+)-binding residues include arginine 132, glutamate 166, lysine 280, and lysine 304. Residues cysteine 398, cysteine 401, cysteine 416, and cysteine 421 each contribute to the Zn(2+) site. One can recognise a BRCT domain in the interval 579–654; sequence NIEGILSGKT…IWSEQDLLDL (76 aa).

This sequence belongs to the NAD-dependent DNA ligase family. LigA subfamily. The cofactor is Mg(2+). Requires Mn(2+) as cofactor.

The enzyme catalyses NAD(+) + (deoxyribonucleotide)n-3'-hydroxyl + 5'-phospho-(deoxyribonucleotide)m = (deoxyribonucleotide)n+m + AMP + beta-nicotinamide D-nucleotide.. DNA ligase that catalyzes the formation of phosphodiester linkages between 5'-phosphoryl and 3'-hydroxyl groups in double-stranded DNA using NAD as a coenzyme and as the energy source for the reaction. It is essential for DNA replication and repair of damaged DNA. The sequence is that of DNA ligase from Lactococcus lactis subsp. lactis (strain IL1403) (Streptococcus lactis).